Consider the following 210-residue polypeptide: Probable HTH-type transcriptional regulator ArpR (210 aa).

One can recognise an HTH tetR-type domain in the interval 10-70 (QETRAQIIEA…ALLDSLHETH (61 aa)). The H-T-H motif DNA-binding region spans 33-52 (TLADIAELAGVTRGAIYWHF).

In terms of biological role, probable regulatory protein for the antibiotic efflux pump arpABC operon. May function as a repressor. The protein is Probable HTH-type transcriptional regulator ArpR (arpR) of Pseudomonas putida (Arthrobacter siderocapsulatus).